A 213-amino-acid chain; its full sequence is Kynurenine formamidase (213 aa).

Tryptophan 18 lines the substrate pocket. Histidine 48, histidine 52, and aspartate 54 together coordinate Zn(2+). The active-site Proton donor/acceptor is the histidine 58. 2 residues coordinate Zn(2+): histidine 160 and glutamate 172.

This sequence belongs to the Cyclase 1 superfamily. KynB family. As to quaternary structure, homodimer. Requires Zn(2+) as cofactor.

The enzyme catalyses N-formyl-L-kynurenine + H2O = L-kynurenine + formate + H(+). Its pathway is amino-acid degradation; L-tryptophan degradation via kynurenine pathway; L-kynurenine from L-tryptophan: step 2/2. In terms of biological role, catalyzes the hydrolysis of N-formyl-L-kynurenine to L-kynurenine, the second step in the kynurenine pathway of tryptophan degradation. The sequence is that of Kynurenine formamidase from Burkholderia ambifaria (strain ATCC BAA-244 / DSM 16087 / CCUG 44356 / LMG 19182 / AMMD) (Burkholderia cepacia (strain AMMD)).